We begin with the raw amino-acid sequence, 515 residues long: Bifunctional dihydrofolate reductase-thymidylate synthase (515 aa).

The DHFR domain occupies Ala26–Pro228. Val30 contributes to the substrate binding site. Residues Ala32, Gly38–Thr44, Arg81–Thr83, and Leu101–Arg104 contribute to the NADP(+) site. Ile154, Tyr160, and Thr178 together coordinate substrate. An NADP(+)-binding site is contributed by Gly155 to Glu162. The segment at Glu233–Val515 is thymidylate synthase. Arg253 is a binding site for dUMP. Cys395 is an active-site residue. Residues His396, Gln416–Asp420, Asn428, and His458–Tyr460 contribute to the dUMP site.

In the N-terminal section; belongs to the dihydrofolate reductase family. It in the C-terminal section; belongs to the thymidylate synthase family.

The enzyme catalyses (6S)-5,6,7,8-tetrahydrofolate + NADP(+) = 7,8-dihydrofolate + NADPH + H(+). The catalysed reaction is dUMP + (6R)-5,10-methylene-5,6,7,8-tetrahydrofolate = 7,8-dihydrofolate + dTMP. It participates in cofactor biosynthesis; tetrahydrofolate biosynthesis; 5,6,7,8-tetrahydrofolate from 7,8-dihydrofolate: step 1/1. Bifunctional enzyme. Involved in de novo dTMP biosynthesis. Key enzyme in folate metabolism. Catalyzes an essential reaction for de novo glycine and purine synthesis, DNA precursor synthesis, and for the conversion of dUMP to dTMP. This is Bifunctional dihydrofolate reductase-thymidylate synthase from Crithidia fasciculata.